A 402-amino-acid polypeptide reads, in one-letter code: Plasminogen activator inhibitor 1 (402 aa).

Positions 1–23 (MRMSPVFACLALGLALIFGEGSA) are cleaved as a signal peptide. N-linked (GlcNAc...) asparagine glycans are attached at residues Asn232, Asn288, and Asn352.

Belongs to the serpin family. As to quaternary structure, forms a heterodimer with TMPRSS7. Interacts with VTN. Binds LRP1B; binding is followed by internalization and degradation. Interacts with PPP1CB. In complex with PLAU/uPA, interacts with PLAUR/uPAR. Interacts with SORL1 and LRP1, either alone or in complex with PLAU; these interactions are abolished in the presence of LRPAP1/RAP. The ternary complex composed of PLAUR-PLAU-PAI1 also interacts with SORL1. Interacts with PLAT/tPA. Also interacts with SORL1, when complexed to PLAT/tPA. In terms of tissue distribution, vascular endothelial cells may be the primary site of synthesis of plasma PAI1.

The protein resides in the secreted. Serine protease inhibitor. Inhibits TMPRSS7. Is a primary inhibitor of tissue-type plasminogen activator (PLAT) and urokinase-type plasminogen activator (PLAU). As PLAT inhibitor, it is required for fibrinolysis down-regulation and is responsible for the controlled degradation of blood clots. As PLAU inhibitor, it is involved in the regulation of cell adhesion and spreading. Acts as a regulator of cell migration, independently of its role as protease inhibitor. It is required for stimulation of keratinocyte migration during cutaneous injury repair. It is involved in cellular and replicative senescence. Plays a role in alveolar type 2 cells senescence in the lung. Is involved in the regulation of cementogenic differentiation of periodontal ligament stem cells, and regulates odontoblast differentiation and dentin formation during odontogenesis. The sequence is that of Plasminogen activator inhibitor 1 (SERPINE1) from Bos taurus (Bovine).